A 427-amino-acid polypeptide reads, in one-letter code: Glucan 1,3-beta-glucosidase 2 (427 aa).

Residues 1 to 17 form the signal peptide; that stretch reads MLISTFIISSLLSIALA. Residue glutamate 217 is the Proton donor of the active site. 2 disulfides stabilise this stretch: cysteine 299/cysteine 426 and cysteine 324/cysteine 355. Glutamate 316 serves as the catalytic Nucleophile.

The protein belongs to the glycosyl hydrolase 5 (cellulase A) family.

The protein localises to the secreted. The catalysed reaction is Successive hydrolysis of beta-D-glucose units from the non-reducing ends of (1-&gt;3)-beta-D-glucans, releasing alpha-glucose.. Its function is as follows. Beta-glucanases participate in the metabolism of beta-glucan, the main structural component of the cell wall. It could also function biosynthetically as a transglycosylase. The chain is Glucan 1,3-beta-glucosidase 2 (EXG2) from Wickerhamomyces anomalus (Yeast).